Reading from the N-terminus, the 491-residue chain is Glycylpeptide N-tetradecanoyltransferase (491 aa).

A tetradecanoyl-CoA-binding site is contributed by 45-48 (HKFW). A disordered region spans residues 53–79 (VPQITGSGASAPMEEGPIDDPKTPADV). Residues 182 to 184 (LCV) and 190 to 194 (SKRLA) contribute to the tetradecanoyl-CoA site. The active-site Proton acceptor; via carboxylate is the Leu-491.

The protein belongs to the NMT family. In terms of assembly, monomer.

Its subcellular location is the cytoplasm. The enzyme catalyses N-terminal glycyl-[protein] + tetradecanoyl-CoA = N-tetradecanoylglycyl-[protein] + CoA + H(+). Adds a myristoyl group to the N-terminal glycine residue of certain cellular proteins. The polypeptide is Glycylpeptide N-tetradecanoyltransferase (Cryptococcus neoformans (Filobasidiella neoformans)).